We begin with the raw amino-acid sequence, 280 residues long: MIREKKSFHLHMLSDATGETLISVGRAVASQYATSQVTEHIYPMIRNETQLRRALDEIQQELGIVLYTIIDKKIKLLLKKRCEKMEVPCIDILHPVLDAFQSYLGTPTNLRVSAQHDLNADYFRRIEALDFTIEHDDGKSPKGLSDADVILVGISRTSKTPTSIYLANRGIKTANVPLIPGIGFPEALLEAKNTLIVGLIASAERISHIRQNRDLGHGFAVESYTDRISIAEELIYAKRICERFGWPVIDVTRRSIEETAAAIFELLSWFREGKWKKNPS.

153 to 160 (GISRTSKT) contributes to the ADP binding site.

This sequence belongs to the pyruvate, phosphate/water dikinase regulatory protein family. PDRP subfamily.

It catalyses the reaction N(tele)-phospho-L-histidyl/L-threonyl-[pyruvate, phosphate dikinase] + ADP = N(tele)-phospho-L-histidyl/O-phospho-L-threonyl-[pyruvate, phosphate dikinase] + AMP + H(+). It carries out the reaction N(tele)-phospho-L-histidyl/O-phospho-L-threonyl-[pyruvate, phosphate dikinase] + phosphate + H(+) = N(tele)-phospho-L-histidyl/L-threonyl-[pyruvate, phosphate dikinase] + diphosphate. In terms of biological role, bifunctional serine/threonine kinase and phosphorylase involved in the regulation of the pyruvate, phosphate dikinase (PPDK) by catalyzing its phosphorylation/dephosphorylation. This chain is Putative pyruvate, phosphate dikinase regulatory protein, found in Bartonella quintana (strain Toulouse) (Rochalimaea quintana).